Here is a 129-residue protein sequence, read N- to C-terminus: Snaclec coagulation factor IX/factor X-binding protein subunit B3 (129 aa).

An N-terminal signal peptide occupies residues 1-8; that stretch reads LSLSGTAA. Intrachain disulfides connect cysteine 10–cysteine 21, cysteine 38–cysteine 127, and cysteine 104–cysteine 119. The C-type lectin domain occupies 17 to 128; the sequence is YEGHCYKPFN…CRMMANFVCE (112 aa).

Belongs to the snaclec family. Heterodimer of subunits A and B3; disulfide-linked. As to expression, expressed by the venom gland.

Its subcellular location is the secreted. Its function is as follows. Anticoagulant protein which binds to the gamma-carboxyglutamic acid-domain regions of factors IX (F9) and factor X (F10) in the presence of calcium with a 1 to 1 stoichiometry. The protein is Snaclec coagulation factor IX/factor X-binding protein subunit B3 of Trimeresurus stejnegeri (Chinese green tree viper).